The sequence spans 210 residues: Riboflavin kinase (210 aa).

Residues 1 to 81 are H-T-H motif-like; the sequence is MECKERRLIG…DLLRYFNIAS (81 aa). The tract at residues 82 to 210 is riboflavin kinase; sequence IRLIGRVISG…GDIVEVEILL (129 aa). Residue 91–96 coordinates CDP; that stretch reads GLGEGA. 2 residues coordinate Mg(2+): Thr120 and Asn122. Thr177 and Glu185 together coordinate FMN. CDP is bound at residue 190 to 193; sequence VKLR.

The protein belongs to the archaeal riboflavin kinase family. Mg(2+) serves as cofactor.

The catalysed reaction is riboflavin + CTP = CDP + FMN + H(+). It participates in cofactor biosynthesis; FMN biosynthesis; FMN from riboflavin (CTP route): step 1/1. Functionally, catalyzes the CTP-dependent phosphorylation of riboflavin (vitamin B2) to form flavin mononucleotide (FMN). In Pyrobaculum aerophilum (strain ATCC 51768 / DSM 7523 / JCM 9630 / CIP 104966 / NBRC 100827 / IM2), this protein is Riboflavin kinase (ribK).